The primary structure comprises 475 residues: Putative poly(A) polymerase catalytic subunit (475 aa).

It belongs to the poxviridae poly(A) polymerase catalytic subunit family. Highly divergent.

Its subcellular location is the virion. The enzyme catalyses RNA(n) + ATP = RNA(n)-3'-adenine ribonucleotide + diphosphate. Its function is as follows. Polymerase that creates the 3'-poly(A) tail of mRNA's. This chain is Putative poly(A) polymerase catalytic subunit, found in Ornithodoros (relapsing fever ticks).